The sequence spans 260 residues: Global transcriptional regulator CodY (260 aa).

Positions 1–159 (MPNLLEKTRK…SSTVVGIQLL (159 aa)) are GAF domain. Positions 207–226 (ASVIADRIGITRSVIVNALR) form a DNA-binding region, H-T-H motif.

This sequence belongs to the CodY family.

Its subcellular location is the cytoplasm. Its function is as follows. DNA-binding global transcriptional regulator which is involved in the adaptive response to starvation and acts by directly or indirectly controlling the expression of numerous genes in response to nutrient availability. During rapid exponential growth, CodY is highly active and represses genes whose products allow adaptation to nutrient depletion. The chain is Global transcriptional regulator CodY from Streptococcus pyogenes serotype M4 (strain MGAS10750).